The primary structure comprises 359 residues: MSKSRRIGILTSGGDCSGLNAVIRAVVHCASGKGWEVFGIRQATLGLMARPPQVSKLEIDQVDPLLTSGGTMLGTTNKGDPFAFPMPDGSFCDRSSEIIAGYHQLDLDALIGIGGDGSLAILRRLAQQGAINLVGIPKTIDNDIGITEHAIGFDTAVNIATEALDRLHFTAASHSRVMILEVMGRDAGHIALAAGIAGGADVILIPEILYSMDDICYHIKHRQEEGKNYCLIIVSEAVRTQDGEILTLTNRLGQSRYGGIGEYLADQISDRIGAETRVTVLGHIQRGGIASPLDRLVASAFGVAAVNLIEAAKYDYMVAWQNRQVITVPIEEAIAQYKAVNPEDALVKTARGLGIYLGE.

ATP-binding positions include G14, 78–79 (KG), and 115–118 (GDGS). D116 contributes to the Mg(2+) binding site. Residues 139 to 141 (TID), R176, 183 to 185 (MGR), E236, R277, and 283 to 286 (HIQR) contribute to the substrate site. The active-site Proton acceptor is the D141.

Belongs to the phosphofructokinase type A (PFKA) family. Mixed-substrate PFK group III subfamily. Homodimer or homotetramer. Requires Mg(2+) as cofactor.

It localises to the cytoplasm. It catalyses the reaction beta-D-fructose 6-phosphate + ATP = beta-D-fructose 1,6-bisphosphate + ADP + H(+). It functions in the pathway carbohydrate degradation; glycolysis; D-glyceraldehyde 3-phosphate and glycerone phosphate from D-glucose: step 3/4. Functionally, catalyzes the phosphorylation of D-fructose 6-phosphate to fructose 1,6-bisphosphate by ATP, the first committing step of glycolysis. The polypeptide is ATP-dependent 6-phosphofructokinase 1 (Nostoc sp. (strain PCC 7120 / SAG 25.82 / UTEX 2576)).